The following is an 874-amino-acid chain: Collagen alpha-2(I) chain (874 aa).

The disordered stretch occupies residues 1–874; the sequence is SGGFDFSFLP…FGYEGDFYRA (874 aa). A 4-hydroxyproline mark is found at Pro-10 and Pro-13. An Allysine modification is found at Lys-16. The segment covering 27-66 has biased composition (low complexity); sequence LMGPRGPPGASGAPGPQGFQGPAGEPGEPGQTGPAGARGP. Pro-34 and Pro-40 each carry 4-hydroxyproline. Lys-93 carries the post-translational modification 5-hydroxylysine; alternate. Lys-93 carries an O-linked (Gal...) hydroxylysine; alternate glycan. Low complexity-rich tracts occupy residues 110-143, 188-209, and 218-236; these read ARGRVGAPGPAGARGSDGSVGPVGPAGPIGSAGP, PGANGLTGAKGAAGLPGVAGAP, and PGPVGARGLVGEPGPAGSK. The segment covering 237–246 has biased composition (gly residues); it reads GESGGKGEPG. Positions 247 to 257 are enriched in low complexity; that stretch reads SAGPQGPPGSS. 2 positions are modified to 4-hydroxyproline: Pro-317 and Pro-320. Composition is skewed to low complexity over residues 346–365, 434–451, and 463–473; these read LPGIDGRPGPIGPAGARGEA, PGESGAVGPSGAIGSRGP, and EPGVVGAPGTA. Positions 474–483 are enriched in gly residues; that stretch reads GPAGSGGLPG. Low complexity-rich tracts occupy residues 491–538 and 545–565; these read RGEV…PRGS and VGPAGPNGFAGPAGAAGQPGA. The span at 566 to 575 shows a compositional bias: basic and acidic residues; the sequence is KGERGTKGPK. A compositionally biased stretch (low complexity) spans 583-593; sequence PTGPVGSAGPA. The segment covering 603-612 has biased composition (gly residues); it reads GSRGDGGPPG. Positions 614-623 are enriched in low complexity; the sequence is TGFPGAAGRT. Gly residues predominate over residues 648–662; the sequence is GPVGRGETGAGGPPG. Composition is skewed to low complexity over residues 663–697 and 705–724; these read FTGEKGPSGEPGTAGPPGTAGPQGLLGAPGILGLP and LPGVAGAVGEPGPLGIAGPP. Over residues 725–744 the composition is skewed to gly residues; that stretch reads GARGDGNPGSDGPPGRGAAG. Low complexity-rich tracts occupy residues 745 to 755 and 763 to 778; these read APGPHGTVGPA and EPGPVGSVGPVGALGP.

Belongs to the fibrillar collagen family. Trimers of one alpha 2(I) and two alpha 1(I) chains. Interacts (via C-terminus) with TMEM131 (via PapD-L domain); the interaction is direct and is involved in assembly and TRAPPIII ER-to-Golgi transport complex-dependent secretion of collagen. In terms of processing, prolines at the third position of the tripeptide repeating unit (G-X-Y) are hydroxylated in some or all of the chains. Expressed in bones.

The protein localises to the secreted. It is found in the extracellular space. The protein resides in the extracellular matrix. Its function is as follows. Type I collagen is a member of group I collagen (fibrillar forming collagen). This is Collagen alpha-2(I) chain from Megalonyx jeffersonii (Jefferson's ground sloth).